Here is a 376-residue protein sequence, read N- to C-terminus: Lipoprotein p33 (376 aa).

The signal sequence occupies residues 1–30 (MKIKKIKLLKALALTGAFGIVATVPVIVYS). Cys-31 carries N-palmitoyl cysteine lipidation. Cys-31 is lipidated: S-diacylglycerol cysteine. The segment at 35 to 59 (DNNGGTGDNNTGGGGSGTDQQQGTT) is disordered. A compositionally biased stretch (gly residues) spans 38-51 (GGTGDNNTGGGGSG).

This sequence belongs to the p35 lipoprotein family.

It localises to the cell membrane. This is Lipoprotein p33 from Malacoplasma penetrans (Mycoplasma penetrans).